We begin with the raw amino-acid sequence, 158 residues long: UPF0098 protein YbhB (158 aa).

The protein belongs to the UPF0098 family. In terms of assembly, homodimer.

It is found in the cytoplasm. The protein is UPF0098 protein YbhB (ybhB) of Escherichia coli (strain K12).